Reading from the N-terminus, the 500-residue chain is Glycerol kinase (500 aa).

Thr-12 is an ADP binding site. Thr-12, Thr-13, and Ser-14 together coordinate ATP. Residue Thr-12 coordinates sn-glycerol 3-phosphate. An ADP-binding site is contributed by Arg-16. Residues Arg-82, Glu-83, Tyr-134, and Asp-244 each coordinate sn-glycerol 3-phosphate. Arg-82, Glu-83, Tyr-134, Asp-244, and Gln-245 together coordinate glycerol. Residues Thr-266 and Gly-309 each contribute to the ADP site. Residues Thr-266, Gly-309, Gln-313, and Gly-410 each contribute to the ATP site. The ADP site is built by Gly-410 and Asn-414.

The protein belongs to the FGGY kinase family. As to quaternary structure, homotetramer and homodimer (in equilibrium).

The catalysed reaction is glycerol + ATP = sn-glycerol 3-phosphate + ADP + H(+). It functions in the pathway polyol metabolism; glycerol degradation via glycerol kinase pathway; sn-glycerol 3-phosphate from glycerol: step 1/1. Activated by phosphorylation and inhibited by fructose 1,6-bisphosphate (FBP). Key enzyme in the regulation of glycerol uptake and metabolism. Catalyzes the phosphorylation of glycerol to yield sn-glycerol 3-phosphate. This chain is Glycerol kinase, found in Alkaliphilus metalliredigens (strain QYMF).